The primary structure comprises 157 residues: Crossover junction endodeoxyribonuclease RuvC (157 aa).

Active-site residues include Asp-7, Glu-67, and Asp-140. 3 residues coordinate Mg(2+): Asp-7, Glu-67, and Asp-140.

It belongs to the RuvC family. As to quaternary structure, homodimer which binds Holliday junction (HJ) DNA. The HJ becomes 2-fold symmetrical on binding to RuvC with unstacked arms; it has a different conformation from HJ DNA in complex with RuvA. In the full resolvosome a probable DNA-RuvA(4)-RuvB(12)-RuvC(2) complex forms which resolves the HJ. Mg(2+) serves as cofactor.

It localises to the cytoplasm. It carries out the reaction Endonucleolytic cleavage at a junction such as a reciprocal single-stranded crossover between two homologous DNA duplexes (Holliday junction).. The RuvA-RuvB-RuvC complex processes Holliday junction (HJ) DNA during genetic recombination and DNA repair. Endonuclease that resolves HJ intermediates. Cleaves cruciform DNA by making single-stranded nicks across the HJ at symmetrical positions within the homologous arms, yielding a 5'-phosphate and a 3'-hydroxyl group; requires a central core of homology in the junction. The consensus cleavage sequence is 5'-(A/T)TT(C/G)-3'. Cleavage occurs on the 3'-side of the TT dinucleotide at the point of strand exchange. HJ branch migration catalyzed by RuvA-RuvB allows RuvC to scan DNA until it finds its consensus sequence, where it cleaves and resolves the cruciform DNA. The protein is Crossover junction endodeoxyribonuclease RuvC of Rickettsia akari (strain Hartford).